The following is a 141-amino-acid chain: Neuropeptides CP2 (141 aa).

An N-terminal signal peptide occupies residues 1–26 (MDSRICTSFARLMASALCVSTLLVTA). The interval 75 to 94 (KVDMPLPRQRTSSRSSERWA) is disordered. His140 is modified (histidine amide).

Neurons.

It localises to the secreted. Mediates intrinsic neuromodulation. The sequence is that of Neuropeptides CP2 (CP2PP) from Aplysia californica (California sea hare).